Here is a 156-residue protein sequence, read N- to C-terminus: Small ribosomal subunit protein uS7 (156 aa).

The protein belongs to the universal ribosomal protein uS7 family. As to quaternary structure, part of the 30S ribosomal subunit. Contacts proteins S9 and S11.

One of the primary rRNA binding proteins, it binds directly to 16S rRNA where it nucleates assembly of the head domain of the 30S subunit. Is located at the subunit interface close to the decoding center, probably blocks exit of the E-site tRNA. The polypeptide is Small ribosomal subunit protein uS7 (Syntrophomonas wolfei subsp. wolfei (strain DSM 2245B / Goettingen)).